We begin with the raw amino-acid sequence, 448 residues long: Nucleoprotein (448 aa).

Residues 1–55 (MSFTPGKQSSSRASSGNRSGNGILKWADQSDQSRNVQTRGRRAQSKQTATSQQPS) form a disordered region. Residues 9 to 22 (SSSRASSGNRSGNG) are compositionally biased toward low complexity. Composition is skewed to polar residues over residues 29-38 (QSDQSRNVQT) and 45-55 (SKQTATSQQPS). The segment at 52–194 (QQPSGGNVVP…GYYIEGSGRS (143 aa)) is RNA-binding. The CoV N NTD domain maps to 61–190 (PYYSWFSGIT…VLPQGYYIEG (130 aa)). RNA contacts are provided by Arg106, Arg122, and Arg164. Disordered regions lie at residues 158–231 (PADI…VTPD) and 383–420 (QDGT…RVQQ). A Phosphoserine; by host modification is found at Ser167. Thr174 is modified (phosphothreonine; by host). Ser191 is subject to Phosphoserine; by host. A compositionally biased stretch (low complexity) spans 193-223 (RSAPNSRSTSRASSRASSAGSRSRANSGNRT). In terms of domain architecture, CoV N CTD spans 259-384 (AKEIRQKILN…ENLNAYQQQD (126 aa)). Positions 266 to 384 (ILNKPRQKRS…ENLNAYQQQD (119 aa)) are dimerization. Polar residues-rich tracts occupy residues 383-393 (QDGTMNMSPKP) and 399-409 (QKNGQGENDNI). Phosphoserine; by host is present on Ser390. Thr427 is subject to Phosphothreonine; by host.

Belongs to the betacoronavirus nucleocapsid protein family. In terms of assembly, homooligomer. Both monomeric and oligomeric forms interact with RNA. Interacts with protein M. Interacts with NSP3; this interaction serves to tether the genome to the newly translated replicase-transcriptase complex at a very early stage of infection. ADP-ribosylated. The ADP-ribosylation is retained in the virion during infection. In terms of processing, phosphorylated on serine and threonine residues.

The protein localises to the virion. Its subcellular location is the host endoplasmic reticulum-Golgi intermediate compartment. The protein resides in the host Golgi apparatus. In terms of biological role, packages the positive strand viral genome RNA into a helical ribonucleocapsid (RNP) and plays a fundamental role during virion assembly through its interactions with the viral genome and membrane protein M. Plays an important role in enhancing the efficiency of subgenomic viral RNA transcription as well as viral replication. This Bovine coronavirus (strain 98TXSF-110-LUN) (BCoV-LUN) protein is Nucleoprotein.